We begin with the raw amino-acid sequence, 100 residues long: uncharacterized protein (100 aa).

Residues 65 to 91 show a composition bias toward basic and acidic residues; the sequence is DDRERHLSATGERRREQGFGTSRRKDP. Residues 65 to 100 are disordered; that stretch reads DDRERHLSATGERRREQGFGTSRRKDPSLYNWSDVK.

It belongs to the chlamydial CPn_0121/CT_031/TC_0300 family.

This is an uncharacterized protein from Chlamydia trachomatis serovar D (strain ATCC VR-885 / DSM 19411 / UW-3/Cx).